A 685-amino-acid chain; its full sequence is Hemocyanin subunit X (685 aa).

Residues Met-1–Ala-20 form the signal peptide. Cu cation-binding residues include His-210, His-214, and His-243. An N-linked (GlcNAc...) asparagine glycan is attached at Asn-329. Positions 367, 371, and 407 each coordinate Cu cation. A disulfide bond links Cys-577 and Cys-625.

Belongs to the tyrosinase family. Hemocyanin subfamily.

The protein localises to the secreted. The protein resides in the extracellular space. In terms of biological role, hemocyanins are copper-containing oxygen carriers occurring freely dissolved in the hemolymph of many mollusks and arthropods. The sequence is that of Hemocyanin subunit X (HCX) from Scutigera coleoptrata (House centipede).